Consider the following 831-residue polypeptide: Probable beta-glucosidase H (831 aa).

A glycan (N-linked (GlcNAc...) asparagine) is linked at N13. The active site involves D225. The region spanning R389–V549 is the PA14 domain. N-linked (GlcNAc...) asparagine glycans are attached at residues N474, N514, N604, N629, N726, and N823.

It belongs to the glycosyl hydrolase 3 family.

Its subcellular location is the secreted. It carries out the reaction Hydrolysis of terminal, non-reducing beta-D-glucosyl residues with release of beta-D-glucose.. The protein operates within glycan metabolism; cellulose degradation. Functionally, beta-glucosidases are one of a number of cellulolytic enzymes involved in the degradation of cellulosic biomass. Catalyzes the last step releasing glucose from the inhibitory cellobiose. The sequence is that of Probable beta-glucosidase H (bglH) from Emericella nidulans (strain FGSC A4 / ATCC 38163 / CBS 112.46 / NRRL 194 / M139) (Aspergillus nidulans).